Consider the following 692-residue polypeptide: Elongation factor G (692 aa).

The tr-type G domain maps to 8–283 (EMTRNIGIMA…AVLDYMPAPT (276 aa)). GTP-binding positions include 17 to 24 (AHIDAGKT), 81 to 85 (DTPGH), and 135 to 138 (NKMD).

The protein belongs to the TRAFAC class translation factor GTPase superfamily. Classic translation factor GTPase family. EF-G/EF-2 subfamily.

It localises to the cytoplasm. Its function is as follows. Catalyzes the GTP-dependent ribosomal translocation step during translation elongation. During this step, the ribosome changes from the pre-translocational (PRE) to the post-translocational (POST) state as the newly formed A-site-bound peptidyl-tRNA and P-site-bound deacylated tRNA move to the P and E sites, respectively. Catalyzes the coordinated movement of the two tRNA molecules, the mRNA and conformational changes in the ribosome. In Citrifermentans bemidjiense (strain ATCC BAA-1014 / DSM 16622 / JCM 12645 / Bem) (Geobacter bemidjiensis), this protein is Elongation factor G.